The following is a 2005-amino-acid chain: Sodium channel protein type 2 subunit alpha (2005 aa).

The Cytoplasmic portion of the chain corresponds to 1–129; sequence MAQSVLVPPG…KLAIKILVHS (129 aa). The residue at position 4 (S4) is a Phosphoserine. Residues 28-61 form a disordered region; it reads RIAEEKAKRPKQERKDEDDENGPKPNSDLEAGKS. A Glycyl lysine isopeptide (Lys-Gly) (interchain with G-Cter in SUMO1) cross-link involves residue K38. The I repeat unit spans residues 111 to 456; sequence ILTPFNPIRK…QQMLEQLKKQ (346 aa). The chain crosses the membrane as a helical span at residues 130-148; the sequence is LFNMLIMCTILTNCVFMTM. Over 149 to 155 the chain is Extracellular; sequence SNPPDWT. Residues 156-176 traverse the membrane as a helical segment; it reads KNVEYTFTGIYTFESLIKILA. Residues 177–190 lie on the Cytoplasmic side of the membrane; it reads RGFCLEDFTFLRDP. Residues 191–208 traverse the membrane as a helical segment; the sequence is WNWLDFTVITFAYVTEFV. Residues 209-214 lie on the Extracellular side of the membrane; the sequence is DLGNVS. N212 is a glycosylation site (N-linked (GlcNAc...) asparagine). Residues 215–231 form a helical membrane-spanning segment; it reads ALRTFRVLRALKTISVI. Residues 232-250 lie on the Cytoplasmic side of the membrane; the sequence is PGLKTIVGALIQSVKKLSD. The chain crosses the membrane as a helical span at residues 251 to 270; sequence VMILTVFCLSVFALIGLQLF. Over 271-369 the chain is Extracellular; it reads MGNLRNKCLQ…PNYGYTSFDT (99 aa). C278 and C338 are disulfide-bonded. 6 N-linked (GlcNAc...) asparagine glycosylation sites follow: N285, N291, N297, N303, N308, and N340. An intramembrane region (pore-forming) is located at residues 370-394; that stretch reads FSWAFLSLFRLMTQDFWENLYQLTL. Over 395–401 the chain is Extracellular; it reads RAAGKTY. A helical membrane pass occupies residues 402–422; it reads MIFFVLVIFLGSFYLINLILA. Over 423 to 759 the chain is Cytoplasmic; that stretch reads VVAMAYEEQN…HLVNLVVMDP (337 aa). S468, S471, S484, S526, S528, S531, S553, S554, S558, S573, S576, S589, S610, S623, S686, S687, and S721 each carry phosphoserine. Residues 494–529 form a disordered region; the sequence is SSKSEKELKNRRKKKKQKEQSGEEEKNDRVRKSESE. Residues 511–529 are compositionally biased toward basic and acidic residues; sequence KEQSGEEEKNDRVRKSESE. The disordered stretch occupies residues 590 to 610; the sequence is ENDFADDEHSTFEDNDSRRDS. Positions 596–610 are enriched in basic and acidic residues; sequence DEHSTFEDNDSRRDS. An II repeat occupies 741-1013; the sequence is CCKPWLKVKH…QIAVGRMQKG (273 aa). A helical transmembrane segment spans residues 760-778; the sequence is FVDLAITICIVLNTLFMAM. Residues 779–789 lie on the Extracellular side of the membrane; sequence EHYPMTEQFSS. Residues 790–809 traverse the membrane as a helical segment; that stretch reads VLSVGNLVFTGIFTAEMFLK. At 810–823 the chain is on the cytoplasmic side; sequence IIAMDPYYYFQEGW. A helical transmembrane segment spans residues 824–843; sequence NIFDGFIVSLSLMELGLANV. Residues 844–845 are Extracellular-facing; that stretch reads EG. The helical transmembrane segment at 846 to 863 threads the bilayer; sequence LSVLRSFRLLRVFKLAKS. At 864–879 the chain is on the cytoplasmic side; it reads WPTLNMLIKIIGNSVG. The helical transmembrane segment at 880 to 898 threads the bilayer; that stretch reads ALGNLTLVLAIIVFIFAVV. Residues 899-927 lie on the Extracellular side of the membrane; sequence GMQLFGKSYKECVCKISNDCELPRWHMHD. C912 and C918 are joined by a disulfide. A binds SCN2B region spans residues 917–918; the sequence is DC. The pore-forming intramembrane region spans 928 to 948; that stretch reads FFHSFLIVFRVLCGEWIETMW. At 949 to 961 the chain is on the extracellular side; it reads DCMEVAGQTMCLT. C950 and C959 are oxidised to a cystine. A helical transmembrane segment spans residues 962–982; it reads VFMMVMVIGNLVVLNLFLALL. The Cytoplasmic portion of the chain corresponds to 983 to 1209; it reads LSSFSSDNLA…TCYKIVEHNW (227 aa). The interval 1120–1165 is disordered; the sequence is EEFSSESDMEESKEKLNATSSSEGSTVDIGAPAEGEQPEVEPEESL. Residues 1155–1165 are compositionally biased toward acidic residues; that stretch reads EQPEVEPEESL. One copy of the III repeat lies at 1190 to 1504; that stretch reads KGKLWWNLRK…KKYYNAMKKL (315 aa). Residues 1210–1227 traverse the membrane as a helical segment; sequence FETFIVFMILLSSGALAF. Over 1228–1240 the chain is Extracellular; it reads EDIYIEQRKTIKT. The chain crosses the membrane as a helical span at residues 1241 to 1259; the sequence is MLEYADKVFTYIFILEMLL. Residues 1260–1273 lie on the Cytoplasmic side of the membrane; the sequence is KWVAYGFQVYFTNA. The chain crosses the membrane as a helical span at residues 1274 to 1292; sequence WCWLDFLIVDVSLVSLTAN. The Extracellular portion of the chain corresponds to 1293–1300; that stretch reads ALGYSELG. A helical transmembrane segment spans residues 1301–1319; sequence AIKSLRTLRALRPLRALSR. Residues 1320 to 1336 lie on the Cytoplasmic side of the membrane; it reads FEGMRVVVNALLGAIPS. A helical membrane pass occupies residues 1337 to 1356; it reads IMNVLLVCLIFWLIFSIMGV. At 1357–1408 the chain is on the extracellular side; the sequence is NLFAGKFYHCINYTTGEMFDVSVVNNYSECKALIESNQTARWKNVKVNFDNV. C1366 and C1386 form a disulfide bridge. N-linked (GlcNAc...) asparagine glycans are attached at residues N1368, N1382, and N1393. The pore-forming intramembrane region spans 1409–1430; the sequence is GLGYLSLLQVATFKGWMDIMYA. The Extracellular segment spans residues 1431–1447; it reads AVDSRNVELQPKYEDNL. A helical membrane pass occupies residues 1448–1469; it reads YMYLYFVIFIIFGSFFTLNLFI. The Cytoplasmic segment spans residues 1470–1532; sequence GVIIDNFNQQ…MVFDFVTKQV (63 aa). S1506 bears the Phosphoserine; by PKC mark. The stretch at 1513 to 1811 is one IV repeat; it reads IPRPANKFQG…WEKFDPDATQ (299 aa). Residues 1533–1550 traverse the membrane as a helical segment; that stretch reads FDISIMILICLNMVTMMV. The Extracellular segment spans residues 1551 to 1561; it reads ETDDQSQEMTN. Residues 1562-1580 form a helical membrane-spanning segment; it reads ILYWINLVFIVLFTGECVL. Residues 1581–1592 are Cytoplasmic-facing; it reads KLISLRYYYFTI. A helical membrane pass occupies residues 1593 to 1610; sequence GWNIFDFVVVILSIVGMF. Over 1611–1623 the chain is Extracellular; that stretch reads LAELIEKYFVSPT. A helical membrane pass occupies residues 1624 to 1640; sequence LFRVIRLARIGRILRLI. Over 1641 to 1659 the chain is Cytoplasmic; that stretch reads KGAKGIRTLLFALMMSLPA. The chain crosses the membrane as a helical span at residues 1660–1677; it reads LFNIGLLLFLVMFIYAIF. Residues 1678–1699 are Extracellular-facing; the sequence is GMSNFAYVKREVGIDDMFNFET. Residues 1700 to 1722 constitute an intramembrane region (pore-forming); that stretch reads FGNSMICLFQITTSAGWDGLLAP. Over 1723–1752 the chain is Extracellular; the sequence is ILNSGPPDCDPDKDHPGSSVKGDCGNPSVG. A disulfide bridge connects residues C1731 and C1746. The helical transmembrane segment at 1753–1775 threads the bilayer; the sequence is IFFFVSYIIISFLVVVNMYIAVI. Topologically, residues 1776–2005 are cytoplasmic; that stretch reads LENFSVATEE…KGKDIRESKK (230 aa). Residues 1905-1934 form the IQ domain; the sequence is EEVSAIIIQRAYRRYLLKQKVKKVSSIYKK. Residue S1930 is modified to Phosphoserine. Residues 1935–1964 show a composition bias toward basic and acidic residues; that stretch reads DKGKECDGTPIKEDTLIDKLNENSTPEKTD. Residues 1935–2005 form a disordered region; that stretch reads DKGKECDGTP…KGKDIRESKK (71 aa). Phosphothreonine is present on residues T1943, T1963, and T1966. S1971 carries the phosphoserine modification. Residues 1979–2005 show a composition bias toward basic and acidic residues; that stretch reads TKPEKEKFEKDKSEKEDKGKDIRESKK.

This sequence belongs to the sodium channel (TC 1.A.1.10) family. Nav1.2/SCN2A subfamily. Heterooligomer of a large alpha subunit and a smaller beta subunit. Heterooligomer with SCN2B or SCN4B; disulfide-linked. Heterooligomer with SCN1B or SCN3B; non-covalently linked. Interacts with NEDD4L. Interacts with CALM. Interacts with TMEM233. Interacts with the conotoxin GVIIJ. Interacts with the spider beta/delta-theraphotoxin-Pre1a. Interacts with the conotoxin KIIIA. Interacts with the spider protoxin-II. Post-translationally, may be ubiquitinated by NEDD4L; which would promote its endocytosis. Phosphorylation at Ser-1506 by PKC in a highly conserved cytoplasmic loop slows inactivation of the sodium channel and reduces peak sodium currents. In terms of processing, sumoylated at Lys-38. Sumoylation is induced by hypoxia, increases voltage-gated sodium current and mediates the early response to acute hypoxia in neurons. Sumoylated SCN2A is located at the cell membrane.

It localises to the cell membrane. The catalysed reaction is Na(+)(in) = Na(+)(out). Functionally, mediates the voltage-dependent sodium ion permeability of excitable membranes. Assuming opened or closed conformations in response to the voltage difference across the membrane, the protein forms a sodium-selective channel through which Na(+) ions may pass in accordance with their electrochemical gradient. Implicated in the regulation of hippocampal replay occurring within sharp wave ripples (SPW-R) important for memory. The polypeptide is Sodium channel protein type 2 subunit alpha (Homo sapiens (Human)).